Consider the following 319-residue polypeptide: Putative olfactory receptor 52L2 (319 aa).

Topologically, residues 1-43 (MNLDSFFSFLLKSLIMALSNSSWRLPQPSFFLVGIPGLEESQH) are extracellular. The N-linked (GlcNAc...) asparagine glycan is linked to Asn-20. A helical membrane pass occupies residues 44–64 (WIALPLGILYLLALVGNVTIL). Over 65 to 72 (FIIWMDPS) the chain is Cytoplasmic. A helical transmembrane segment spans residues 73 to 93 (LHQSMYLFLSMLAAIDLVVAS). Residues 94–117 (STAPKALAVLLVRAQEIGYTVCLI) lie on the Extracellular side of the membrane. A disulfide bridge connects residues Cys-115 and Cys-207. The chain crosses the membrane as a helical span at residues 118–138 (QMFFTHAFSSMESGVLVAMAL). At 139–157 (DRYVAICHPLHHSTILHPG) the chain is on the cytoplasmic side. Residues 158 to 178 (VIGHIGMVVLVRGLLLLIPFL) traverse the membrane as a helical segment. Over 179-214 (ILLRKLIFCQATIIGHAYCEHMAVVKLACSETTVNR) the chain is Extracellular. The helical transmembrane segment at 215–235 (AYGLTVALLVVGLDVLAIGVS) threads the bilayer. Residues 236–255 (YAHILQAVLKVPGNEARLKA) are Cytoplasmic-facing. The chain crosses the membrane as a helical span at residues 256-276 (FSTCGSHVCVILVFYIPGMFS). The Extracellular segment spans residues 277-291 (FLTHRFGHHVPHHVH). A helical membrane pass occupies residues 292–312 (VLLAILYRLVPPALNPLVYRV). Over 313–319 (KTQKIHQ) the chain is Cytoplasmic.

It belongs to the G-protein coupled receptor 1 family.

The protein localises to the cell membrane. Odorant receptor. The sequence is that of Putative olfactory receptor 52L2 (OR52L2P) from Homo sapiens (Human).